Reading from the N-terminus, the 621-residue chain is 1-deoxy-D-xylulose-5-phosphate synthase (621 aa).

Residues histidine 80 and 121–123 (GHS) contribute to the thiamine diphosphate site. Aspartate 152 lines the Mg(2+) pocket. Residues 153 to 154 (GA), asparagine 181, tyrosine 288, and glutamate 370 each bind thiamine diphosphate. Asparagine 181 lines the Mg(2+) pocket.

Belongs to the transketolase family. DXPS subfamily. In terms of assembly, homodimer. Mg(2+) is required as a cofactor. It depends on thiamine diphosphate as a cofactor.

The enzyme catalyses D-glyceraldehyde 3-phosphate + pyruvate + H(+) = 1-deoxy-D-xylulose 5-phosphate + CO2. Its pathway is metabolic intermediate biosynthesis; 1-deoxy-D-xylulose 5-phosphate biosynthesis; 1-deoxy-D-xylulose 5-phosphate from D-glyceraldehyde 3-phosphate and pyruvate: step 1/1. Its function is as follows. Catalyzes the acyloin condensation reaction between C atoms 2 and 3 of pyruvate and glyceraldehyde 3-phosphate to yield 1-deoxy-D-xylulose-5-phosphate (DXP). The chain is 1-deoxy-D-xylulose-5-phosphate synthase from Pseudoalteromonas atlantica (strain T6c / ATCC BAA-1087).